The chain runs to 613 residues: UvrABC system protein C (613 aa).

One can recognise a GIY-YIG domain in the interval 20–98 (ERPGVYLMYD…IKRHKPRYNI (79 aa)). The region spanning 209 to 244 (FDVIESLGHKMQQASDEFEFEKAALYRDKISALRAI) is the UVR domain.

The protein belongs to the UvrC family. In terms of assembly, interacts with UvrB in an incision complex.

The protein localises to the cytoplasm. In terms of biological role, the UvrABC repair system catalyzes the recognition and processing of DNA lesions. UvrC both incises the 5' and 3' sides of the lesion. The N-terminal half is responsible for the 3' incision and the C-terminal half is responsible for the 5' incision. This chain is UvrABC system protein C, found in Hydrogenovibrio crunogenus (strain DSM 25203 / XCL-2) (Thiomicrospira crunogena).